Reading from the N-terminus, the 206-residue chain is Holliday junction branch migration complex subunit RuvA (206 aa).

A domain I region spans residues 1–64; it reads MIGKLKGVLD…EDMIRLYGFR (64 aa). Residues 65–144 form a domain II region; sequence TVLEREWFRL…AFAGEAAGAI (80 aa). The segment at 145–154 is flexible linker; the sequence is GLKQDLGEGV. The segment at 154–206 is domain III; the sequence is VAPAPVSDAVSALANLGYSRDIAANAVAAALKSAGEGADTGTLIRLGLKELAR.

It belongs to the RuvA family. As to quaternary structure, homotetramer. Forms an RuvA(8)-RuvB(12)-Holliday junction (HJ) complex. HJ DNA is sandwiched between 2 RuvA tetramers; dsDNA enters through RuvA and exits via RuvB. An RuvB hexamer assembles on each DNA strand where it exits the tetramer. Each RuvB hexamer is contacted by two RuvA subunits (via domain III) on 2 adjacent RuvB subunits; this complex drives branch migration. In the full resolvosome a probable DNA-RuvA(4)-RuvB(12)-RuvC(2) complex forms which resolves the HJ.

It is found in the cytoplasm. In terms of biological role, the RuvA-RuvB-RuvC complex processes Holliday junction (HJ) DNA during genetic recombination and DNA repair, while the RuvA-RuvB complex plays an important role in the rescue of blocked DNA replication forks via replication fork reversal (RFR). RuvA specifically binds to HJ cruciform DNA, conferring on it an open structure. The RuvB hexamer acts as an ATP-dependent pump, pulling dsDNA into and through the RuvAB complex. HJ branch migration allows RuvC to scan DNA until it finds its consensus sequence, where it cleaves and resolves the cruciform DNA. The protein is Holliday junction branch migration complex subunit RuvA of Chelativorans sp. (strain BNC1).